The sequence spans 251 residues: Triosephosphate isomerase (251 aa).

9-11 (NWK) contacts substrate. Residue H95 is the Electrophile of the active site. Catalysis depends on E167, which acts as the Proton acceptor. Substrate contacts are provided by residues G173, S212, and 233 to 234 (GG).

Belongs to the triosephosphate isomerase family. As to quaternary structure, homodimer.

It localises to the cytoplasm. It catalyses the reaction D-glyceraldehyde 3-phosphate = dihydroxyacetone phosphate. The protein operates within carbohydrate biosynthesis; gluconeogenesis. It functions in the pathway carbohydrate degradation; glycolysis; D-glyceraldehyde 3-phosphate from glycerone phosphate: step 1/1. Involved in the gluconeogenesis. Catalyzes stereospecifically the conversion of dihydroxyacetone phosphate (DHAP) to D-glyceraldehyde-3-phosphate (G3P). The polypeptide is Triosephosphate isomerase (Vibrio sp. (strain ANT-300)).